The primary structure comprises 496 residues: Glycogen synthase (496 aa).

Residue Lys-15 participates in ADP-alpha-D-glucose binding.

This sequence belongs to the glycosyltransferase 1 family. Bacterial/plant glycogen synthase subfamily.

It carries out the reaction [(1-&gt;4)-alpha-D-glucosyl](n) + ADP-alpha-D-glucose = [(1-&gt;4)-alpha-D-glucosyl](n+1) + ADP + H(+). Its pathway is glycan biosynthesis; glycogen biosynthesis. Synthesizes alpha-1,4-glucan chains using ADP-glucose. In Natranaerobius thermophilus (strain ATCC BAA-1301 / DSM 18059 / JW/NM-WN-LF), this protein is Glycogen synthase.